An 83-amino-acid chain; its full sequence is Hainantoxin-III 12 (83 aa).

Residues 1–21 (MKASMFLALAGLVLLFVVGYA) form the signal peptide. Residues 22 to 48 (SGSEEKEFPRELLSKIFAVDDFKGEER) constitute a propeptide that is removed on maturation. Intrachain disulfides connect cysteine 50–cysteine 65, cysteine 57–cysteine 70, and cysteine 64–cysteine 77. Leucine 81 is modified (leucine amide).

The protein belongs to the neurotoxin 10 (Hwtx-1) family. 15 (Hntx-3) subfamily. Monomer. In terms of tissue distribution, expressed by the venom gland.

It localises to the secreted. In terms of biological role, selective antagonist of neuronal tetrodotoxin (TTX)-sensitive voltage-gated sodium channels (IC(50)=1270 nM on Nav1.1/SCN1A, 270 nM on Nav1.2/SCN2A, 491 nM on Nav1.3/SCN3A and 232 nM on Nav1.7/SCN9A). This toxin suppress Nav1.7 current amplitude without significantly altering the activation, inactivation, and repriming kinetics. Short extreme depolarizations partially activate the toxin-bound channel, indicating voltage-dependent inhibition of this toxin. This toxin increases the deactivation of the Nav1.7 current after extreme depolarizations. The toxin-Nav1.7 complex is gradually dissociated upon prolonged strong depolarizations in a voltage-dependent manner, and the unbound toxin rebinds to Nav1.7 after a long repolarization. Moreover, analysis of chimeric channels showed that the DIIS3-S4 linker is critical for toxin binding to Nav1.7. These data are consistent with this toxin interacting with Nav1.7 site 4 and trapping the domain II voltage sensor in the closed state. This chain is Hainantoxin-III 12, found in Cyriopagopus hainanus (Chinese bird spider).